The sequence spans 95 residues: Protein IDA-LIKE 2 (95 aa).

A signal peptide spans 1 to 35 (MSSRNQRSRITSSFFVSFFTRTILLLLILLLGFCN). The tract at residues 75–95 (ASGPSRKHNDIGLLSWHRSSP) is disordered.

Expressed in leaves, buds, flowers, seedlings and seeds. Detected at the base of pedicel, in the floral and funicule abscission zones and in vascular tissues.

The protein resides in the secreted. Its subcellular location is the extracellular space. In terms of biological role, may be involved in floral abscission. This Arabidopsis thaliana (Mouse-ear cress) protein is Protein IDA-LIKE 2 (IDL2).